A 448-amino-acid chain; its full sequence is Phosphoglucosamine mutase (448 aa).

Catalysis depends on S102, which acts as the Phosphoserine intermediate. S102, D243, D245, and D247 together coordinate Mg(2+). S102 bears the Phosphoserine mark.

It belongs to the phosphohexose mutase family. Mg(2+) is required as a cofactor. In terms of processing, activated by phosphorylation.

It carries out the reaction alpha-D-glucosamine 1-phosphate = D-glucosamine 6-phosphate. In terms of biological role, catalyzes the conversion of glucosamine-6-phosphate to glucosamine-1-phosphate. This Parvibaculum lavamentivorans (strain DS-1 / DSM 13023 / NCIMB 13966) protein is Phosphoglucosamine mutase.